Here is a 506-residue protein sequence, read N- to C-terminus: Histone deacetylase complex subunit CTI6 (506 aa).

The disordered stretch occupies residues 49-71; it reads EESVKQEDVPMEGGEGEVEEEEG. Residues 62–71 show a composition bias toward acidic residues; it reads GEGEVEEEEG. The segment at 72 to 123 adopts a PHD-type zinc-finger fold; sequence ETRCICGELDTPDDSGFFIQCEQCSSWQHGYCVSITQDNAPDKYWCEQCRPE. A disordered region spans residues 138–425; that stretch reads IYKPVQEKRR…KPRLPPQRTS (288 aa). Position 174 is a phosphothreonine (Thr-174). Ser-175 bears the Phosphoserine mark. Thr-177 bears the Phosphothreonine mark. Residues 179–195 are compositionally biased toward acidic residues; sequence DNVDDIGDEEDEVEDEA. A phosphoserine mark is found at Ser-216 and Ser-267. Composition is skewed to basic and acidic residues over residues 231 to 271 and 312 to 342; these read DSDK…HQED and DDMK…EKES. Residues 373–393 are compositionally biased toward basic residues; sequence ASSRGSKRVSKPARKGNRTRR. The segment covering 394–404 has biased composition (polar residues); that stretch reads SNTSSDTNQNR. The segment covering 405 to 415 has biased composition (basic and acidic residues); sequence RSADIGTDKPV.

Component of the RPD3C(L) complex composed of at least ASH1, CTI6, DEP1, PHO23, RPD3, RXT2, RXT3, SAP30, SDS3, SIN3, UME1 and UME6. Interacts with CYC8.

Its subcellular location is the nucleus. Functionally, component of the RPD3C(L) histone deacetylase complex (HDAC). Responsible for the deacetylation of lysine residues on the N-terminal part of the core histones (H2A, H2B, H3 and H4). Histone deacetylation gives a tag for epigenetic repression and plays an important role in transcriptional regulation, cell cycle progression and developmental events. CTI6 links the SAGA coactivator to the CYC8-TUP1 corepressor. Involved in transcription regulation of heme-regulated genes and required for GCN5 recruitment, histone H3 acetylation and SPT15/TBP binding to promoters. The protein is Histone deacetylase complex subunit CTI6 (CTI6) of Saccharomyces cerevisiae (strain ATCC 204508 / S288c) (Baker's yeast).